The sequence spans 174 residues: RNA pyrophosphohydrolase (174 aa).

Residues G6–K149 enclose the Nudix hydrolase domain. Residues G38–G59 carry the Nudix box motif.

The protein belongs to the Nudix hydrolase family. RppH subfamily. A divalent metal cation is required as a cofactor.

Accelerates the degradation of transcripts by removing pyrophosphate from the 5'-end of triphosphorylated RNA, leading to a more labile monophosphorylated state that can stimulate subsequent ribonuclease cleavage. This is RNA pyrophosphohydrolase from Neisseria gonorrhoeae (strain ATCC 700825 / FA 1090).